A 211-amino-acid chain; its full sequence is Large ribosomal subunit protein uL4 (211 aa).

The segment covering G46–M55 has biased composition (polar residues). Positions G46–H89 are disordered.

Belongs to the universal ribosomal protein uL4 family. As to quaternary structure, part of the 50S ribosomal subunit.

Its function is as follows. One of the primary rRNA binding proteins, this protein initially binds near the 5'-end of the 23S rRNA. It is important during the early stages of 50S assembly. It makes multiple contacts with different domains of the 23S rRNA in the assembled 50S subunit and ribosome. In terms of biological role, forms part of the polypeptide exit tunnel. In Leptospira interrogans serogroup Icterohaemorrhagiae serovar copenhageni (strain Fiocruz L1-130), this protein is Large ribosomal subunit protein uL4.